Here is a 154-residue protein sequence, read N- to C-terminus: SsrA-binding protein (154 aa).

This sequence belongs to the SmpB family.

The protein resides in the cytoplasm. In terms of biological role, required for rescue of stalled ribosomes mediated by trans-translation. Binds to transfer-messenger RNA (tmRNA), required for stable association of tmRNA with ribosomes. tmRNA and SmpB together mimic tRNA shape, replacing the anticodon stem-loop with SmpB. tmRNA is encoded by the ssrA gene; the 2 termini fold to resemble tRNA(Ala) and it encodes a 'tag peptide', a short internal open reading frame. During trans-translation Ala-aminoacylated tmRNA acts like a tRNA, entering the A-site of stalled ribosomes, displacing the stalled mRNA. The ribosome then switches to translate the ORF on the tmRNA; the nascent peptide is terminated with the 'tag peptide' encoded by the tmRNA and targeted for degradation. The ribosome is freed to recommence translation, which seems to be the essential function of trans-translation. This is SsrA-binding protein from Methylobacillus flagellatus (strain ATCC 51484 / DSM 6875 / VKM B-1610 / KT).